Consider the following 48-residue polypeptide: Putative ATP synthase protein 8-like protein (48 aa).

The helical transmembrane segment at 17-37 threads the bilayer; the sequence is GFLVILLTLLLLSYAFLSMIL.

This sequence belongs to the ATPase protein 8 family.

It is found in the membrane. The polypeptide is Putative ATP synthase protein 8-like protein (Eremothecium gossypii (strain ATCC 10895 / CBS 109.51 / FGSC 9923 / NRRL Y-1056) (Yeast)).